We begin with the raw amino-acid sequence, 128 residues long: Probable 4-amino-4-deoxy-L-arabinose-phosphoundecaprenol flippase subunit ArnF (128 aa).

The Cytoplasmic segment spans residues 1–2 (MG). A helical membrane pass occupies residues 3 to 23 (LIWGLFSVIIASVAQLSLGFA). Residues 24–35 (ASHLPPMTHLWD) lie on the Periplasmic side of the membrane. Residues 36 to 56 (FIAALLAFGLDARILLLGLLG) form a helical membrane-spanning segment. The Cytoplasmic portion of the chain corresponds to 57-76 (YLLSVFCWYKTLHKLALSKA). The helical transmembrane segment at 77–97 (YALLSMSYVLVWIASMVLPGW) threads the bilayer. Topologically, residues 98 to 100 (EGT) are periplasmic. The helical transmembrane segment at 101–121 (FSLKALLGVACIMSGLMLIFL) threads the bilayer. At 122 to 128 (PTTKQRY) the chain is on the cytoplasmic side.

The protein belongs to the ArnF family. Heterodimer of ArnE and ArnF.

Its subcellular location is the cell inner membrane. Its pathway is bacterial outer membrane biogenesis; lipopolysaccharide biosynthesis. Its function is as follows. Translocates 4-amino-4-deoxy-L-arabinose-phosphoundecaprenol (alpha-L-Ara4N-phosphoundecaprenol) from the cytoplasmic to the periplasmic side of the inner membrane. The polypeptide is Probable 4-amino-4-deoxy-L-arabinose-phosphoundecaprenol flippase subunit ArnF (Shigella boydii serotype 4 (strain Sb227)).